We begin with the raw amino-acid sequence, 262 residues long: Octanoyltransferase (262 aa).

The BPL/LPL catalytic domain occupies 41-232 (PQLPDGLLLL…SFCQVFGLQA (192 aa)). Substrate-binding positions include 96–103 (RGGEVTYH), 163–165 (AIG), and 176–178 (GFA). The Acyl-thioester intermediate role is filled by cysteine 194.

It belongs to the LipB family.

Its subcellular location is the cytoplasm. It catalyses the reaction octanoyl-[ACP] + L-lysyl-[protein] = N(6)-octanoyl-L-lysyl-[protein] + holo-[ACP] + H(+). It participates in protein modification; protein lipoylation via endogenous pathway; protein N(6)-(lipoyl)lysine from octanoyl-[acyl-carrier-protein]: step 1/2. Its function is as follows. Catalyzes the transfer of endogenously produced octanoic acid from octanoyl-acyl-carrier-protein onto the lipoyl domains of lipoate-dependent enzymes. Lipoyl-ACP can also act as a substrate although octanoyl-ACP is likely to be the physiological substrate. This is Octanoyltransferase from Synechococcus sp. (strain JA-2-3B'a(2-13)) (Cyanobacteria bacterium Yellowstone B-Prime).